The sequence spans 87 residues: Small ribosomal subunit protein bS20 (87 aa).

Residues 1-11 are compositionally biased toward basic residues; the sequence is MANIKSAKKRA. Positions 1-27 are disordered; sequence MANIKSAKKRAVQSEKRRQHNASQRSM.

This sequence belongs to the bacterial ribosomal protein bS20 family.

Functionally, binds directly to 16S ribosomal RNA. This chain is Small ribosomal subunit protein bS20, found in Actinobacillus succinogenes (strain ATCC 55618 / DSM 22257 / CCUG 43843 / 130Z).